Consider the following 365-residue polypeptide: Ribosomal RNA large subunit methyltransferase M (365 aa).

Residues Ser-193, 226-229, Asp-245, Asp-265, and Asp-282 each bind S-adenosyl-L-methionine; that span reads CPGG. The active-site Proton acceptor is Lys-311.

The protein belongs to the class I-like SAM-binding methyltransferase superfamily. RNA methyltransferase RlmE family. RlmM subfamily. Monomer.

It localises to the cytoplasm. The catalysed reaction is cytidine(2498) in 23S rRNA + S-adenosyl-L-methionine = 2'-O-methylcytidine(2498) in 23S rRNA + S-adenosyl-L-homocysteine + H(+). Its function is as follows. Catalyzes the 2'-O-methylation at nucleotide C2498 in 23S rRNA. This chain is Ribosomal RNA large subunit methyltransferase M, found in Alteromonas mediterranea (strain DSM 17117 / CIP 110805 / LMG 28347 / Deep ecotype).